The primary structure comprises 274 residues: Large ribosomal subunit protein uL2 (274 aa).

A disordered region spans residues 223 to 274 (VAMNPVDHPHGGGEGRTSGGRHPVTPWGVPTKGYKTRSNKRTDKYIVRRRNK).

The protein belongs to the universal ribosomal protein uL2 family. In terms of assembly, part of the 50S ribosomal subunit. Forms a bridge to the 30S subunit in the 70S ribosome.

One of the primary rRNA binding proteins. Required for association of the 30S and 50S subunits to form the 70S ribosome, for tRNA binding and peptide bond formation. It has been suggested to have peptidyltransferase activity; this is somewhat controversial. Makes several contacts with the 16S rRNA in the 70S ribosome. This is Large ribosomal subunit protein uL2 from Shewanella oneidensis (strain ATCC 700550 / JCM 31522 / CIP 106686 / LMG 19005 / NCIMB 14063 / MR-1).